The primary structure comprises 69 residues: U2-agatoxin-Ao1o (69 aa).

A signal peptide spans 1-20 (MKAIISLLLISAMVFSMFEA). The propeptide occupies 21–34 (VPVRRRFTAFEGER). 3 disulfides stabilise this stretch: Cys-36-Cys-52, Cys-43-Cys-57, and Cys-51-Cys-67. Residue Leu-68 is modified to Leucine amide.

It belongs to the neurotoxin 01 (U2-agtx) family. Expressed by the venom gland.

It is found in the secreted. In terms of biological role, insect active toxin causing rapid but reversible paralysis in crickets. No activity shown in mammals. Does not show effect on mammalian voltage-gated calcium channels. The polypeptide is U2-agatoxin-Ao1o (Agelena orientalis (Funnel-web spider)).